The chain runs to 322 residues: MSDEMIYGDGAIRRQGLYGSSIENTYAGVLSFMRRNYSRDLEGVDVAVSGIPLDLSVTFRSGARMGPQAIRAASVQLAELKPYPWGFDPFEDLAVVDYGDCWFDAHNPLTIKPSIIEHARTILASGAKMLTFGGDHYVTYPLLIAHAEKYGKPLALLHFDAHCDTWPDDSPDSLNHGTMFYKAVKEGLIDPKKSVQVGIRTWNDDFMGLNVLGAPWVHDNGVDATIAEIKKTIGDAPVYVTFDIDCLDPSAAPGTGTPVPGGLTTAQALKIIRNLGDLNIVGMDVVEVAPSYDQSEITAIAAAHIACDMLCLMRNKKVAGTL.

The Mn(2+) site is built by His136, Asp160, His162, Asp164, Asp243, and Asp245.

The protein belongs to the arginase family. Agmatinase subfamily. It depends on Mn(2+) as a cofactor.

The enzyme catalyses agmatine + H2O = urea + putrescine. It functions in the pathway amine and polyamine biosynthesis; putrescine biosynthesis via agmatine pathway; putrescine from agmatine: step 1/1. Its function is as follows. Catalyzes the formation of putrescine from agmatine. This is Agmatinase from Chromobacterium violaceum (strain ATCC 12472 / DSM 30191 / JCM 1249 / CCUG 213 / NBRC 12614 / NCIMB 9131 / NCTC 9757 / MK).